A 72-amino-acid chain; its full sequence is Large ribosomal subunit protein bL31 (72 aa).

Zn(2+) is bound by residues cysteine 16, cysteine 18, cysteine 38, and cysteine 41.

Belongs to the bacterial ribosomal protein bL31 family. Type A subfamily. As to quaternary structure, part of the 50S ribosomal subunit. The cofactor is Zn(2+).

Its function is as follows. Binds the 23S rRNA. This chain is Large ribosomal subunit protein bL31, found in Beutenbergia cavernae (strain ATCC BAA-8 / DSM 12333 / CCUG 43141 / JCM 11478 / NBRC 16432 / NCIMB 13614 / HKI 0122).